The primary structure comprises 364 residues: Methylthioribose-1-phosphate isomerase (364 aa).

Catalysis depends on Asp-254, which acts as the Proton donor.

It belongs to the eIF-2B alpha/beta/delta subunits family. MtnA subfamily.

It is found in the cytoplasm. Its subcellular location is the nucleus. The enzyme catalyses 5-(methylsulfanyl)-alpha-D-ribose 1-phosphate = 5-(methylsulfanyl)-D-ribulose 1-phosphate. The protein operates within amino-acid biosynthesis; L-methionine biosynthesis via salvage pathway; L-methionine from S-methyl-5-thio-alpha-D-ribose 1-phosphate: step 1/6. In terms of biological role, catalyzes the interconversion of methylthioribose-1-phosphate (MTR-1-P) into methylthioribulose-1-phosphate (MTRu-1-P). The polypeptide is Methylthioribose-1-phosphate isomerase (Drosophila yakuba (Fruit fly)).